We begin with the raw amino-acid sequence, 695 residues long: C6 finger domain transcription factor nscR (695 aa).

Residues 17-43 (CELCRERKVKCDKLDPCTNCASAGVVC) constitute a DNA-binding region (zn(2)-C6 fungal-type). Residues 101–113 (SMRSSASQSSNQD) show a composition bias toward low complexity. The disordered stretch occupies residues 101–146 (SMRSSASQSSNQDQESRDAIESISNETEDASAPTPDSSRMPLGDGG).

It localises to the nucleus. Functionally, transcription factor that specifically regulates the neosartoricin B biosynthesis gene cluster. The protein is C6 finger domain transcription factor nscR of Arthroderma otae (strain ATCC MYA-4605 / CBS 113480) (Microsporum canis).